We begin with the raw amino-acid sequence, 317 residues long: Methionyl-tRNA formyltransferase (317 aa).

109–112 (SLLP) is a (6S)-5,6,7,8-tetrahydrofolate binding site.

This sequence belongs to the Fmt family.

It carries out the reaction L-methionyl-tRNA(fMet) + (6R)-10-formyltetrahydrofolate = N-formyl-L-methionyl-tRNA(fMet) + (6S)-5,6,7,8-tetrahydrofolate + H(+). Its function is as follows. Attaches a formyl group to the free amino group of methionyl-tRNA(fMet). The formyl group appears to play a dual role in the initiator identity of N-formylmethionyl-tRNA by promoting its recognition by IF2 and preventing the misappropriation of this tRNA by the elongation apparatus. The protein is Methionyl-tRNA formyltransferase of Desulforamulus reducens (strain ATCC BAA-1160 / DSM 100696 / MI-1) (Desulfotomaculum reducens).